Consider the following 256-residue polypeptide: Alcohol dehydrogenase (256 aa).

12-35 (FVAGLGGIGLDTSKELVKRDLKNL) provides a ligand contact to NAD(+). S140 lines the substrate pocket. Y153 serves as the catalytic Proton acceptor.

The protein belongs to the short-chain dehydrogenases/reductases (SDR) family. As to quaternary structure, homodimer.

The enzyme catalyses a primary alcohol + NAD(+) = an aldehyde + NADH + H(+). It carries out the reaction a secondary alcohol + NAD(+) = a ketone + NADH + H(+). In Drosophila erecta (Fruit fly), this protein is Alcohol dehydrogenase (Adh).